We begin with the raw amino-acid sequence, 87 residues long: Phospholemman (87 aa).

A signal peptide spans 1–20; that stretch reads MASLSHILVLWVGILTVVNA. Over 21–35 the chain is Extracellular; the sequence is EAPQEHDPFTYDYQS. A helical transmembrane segment spans residues 36-56; that stretch reads LRIGGLIIAGILFILGILIVL. The Cytoplasmic segment spans residues 57–87; sequence SRRCRCKFNQQQSLGKMRSPHLAAQFSSESC. Cys-60 is lipidated: S-palmitoyl cysteine. The residue at position 62 (Cys-62) is an S-glutathionyl cysteine; alternate. Cys-62 is lipidated: S-palmitoyl cysteine; alternate. A Phosphoserine; by PKA and PKC modification is found at Ser-75. Phosphoserine; by PKA is present on Ser-83.

This sequence belongs to the FXYD family. In terms of assembly, homotetramer. Monomer. Regulatory subunit of the sodium/potassium-transporting ATPase (NKA) which is composed of a catalytic alpha subunit, a non-catalytic beta subunit and an additional regulatory subunit. The monomeric form associates with NKA while the oligomeric form does not. Interacts with the catalytic alpha-1 subunit ATP1A1. Also interacts with the catalytic alpha-2 and alpha-3 subunits ATP1A2 and ATP1A3. Very little interaction with ATP1A1, ATP1A2 or ATP1A3 when phosphorylated at Ser-83. Interacts with the non-catalytic beta-1 subunit ATP1B1. Oxidative stress decreases interaction with ATP1A1 but increases interaction with ATP1B1. Post-translationally, major plasma membrane substrate for cAMP-dependent protein kinase (PKA) and protein kinase C (PKC) in several different tissues. Phosphorylated in response to insulin and adrenergic stimulation. Phosphorylation at Ser-83 stimulates sodium/potassium-transporting ATPase activity while the unphosphorylated form inhibits sodium/potassium-transporting ATPase activity. Phosphorylation increases tetramerization, decreases binding to ATP1A1 and reduces inhibition of ATP1A1 activity. Phosphorylation at Ser-75 leads to greatly reduced interaction with ATP1A1, ATP1A2 and ATP1A3. May be phosphorylated by DMPK. Palmitoylation increases half-life and stability and is enhanced upon phosphorylation at Ser-83 by PKA.

It is found in the cell membrane. The protein localises to the sarcolemma. Its subcellular location is the apical cell membrane. The protein resides in the membrane. It localises to the caveola. It is found in the T-tubule. Its function is as follows. Associates with and regulates the activity of the sodium/potassium-transporting ATPase (NKA) which transports Na(+) out of the cell and K(+) into the cell. Inhibits NKA activity in its unphosphorylated state and stimulates activity when phosphorylated. Reduces glutathionylation of the NKA beta-1 subunit ATP1B1, thus reversing glutathionylation-mediated inhibition of ATP1B1. Contributes to female sexual development by maintaining the excitability of neurons which secrete gonadotropin-releasing hormone. The protein is Phospholemman of Sus scrofa (Pig).